A 227-amino-acid chain; its full sequence is Thymidylate kinase (227 aa).

16–23 serves as a coordination point for ATP; the sequence is GIDGAGKT.

It belongs to the thymidylate kinase family.

The catalysed reaction is dTMP + ATP = dTDP + ADP. Functionally, phosphorylation of dTMP to form dTDP in both de novo and salvage pathways of dTTP synthesis. The polypeptide is Thymidylate kinase (Xanthomonas oryzae pv. oryzae (strain MAFF 311018)).